The primary structure comprises 158 residues: NADH-quinone oxidoreductase subunit B 1 (158 aa).

Positions 37, 38, 102, and 132 each coordinate [4Fe-4S] cluster.

Belongs to the complex I 20 kDa subunit family. NDH-1 is composed of 14 different subunits. Subunits NuoB, C, D, E, F, and G constitute the peripheral sector of the complex. [4Fe-4S] cluster serves as cofactor.

The protein localises to the cell inner membrane. It carries out the reaction a quinone + NADH + 5 H(+)(in) = a quinol + NAD(+) + 4 H(+)(out). Functionally, NDH-1 shuttles electrons from NADH, via FMN and iron-sulfur (Fe-S) centers, to quinones in the respiratory chain. Couples the redox reaction to proton translocation (for every two electrons transferred, four hydrogen ions are translocated across the cytoplasmic membrane), and thus conserves the redox energy in a proton gradient. This Chromobacterium violaceum (strain ATCC 12472 / DSM 30191 / JCM 1249 / CCUG 213 / NBRC 12614 / NCIMB 9131 / NCTC 9757 / MK) protein is NADH-quinone oxidoreductase subunit B 1.